The sequence spans 161 residues: Allophycocyanin beta chain (161 aa).

Asn-71 is modified (N4-methylasparagine). Cys-81 is a binding site for (2R,3E)-phycocyanobilin.

This sequence belongs to the phycobiliprotein family. Heterodimer of an alpha and a beta chain. In terms of processing, contains one covalently linked phycocyanobilin chromophore.

Its subcellular location is the cellular thylakoid membrane. Its function is as follows. Light-harvesting photosynthetic bile pigment-protein from the phycobiliprotein complex. Allophycocyanin has a maximum absorption at approximately 650 nanometers. The polypeptide is Allophycocyanin beta chain (apcB) (Synechococcus sp. (strain ATCC 27144 / PCC 6301 / SAUG 1402/1) (Anacystis nidulans)).